The chain runs to 327 residues: Methionine import ATP-binding protein MetN (327 aa).

The ABC transporter domain occupies 3-239 (VELKNIEKIY…PKHAVTKELI (237 aa)). An ATP-binding site is contributed by 36–43 (GYSGAGKS).

The protein belongs to the ABC transporter superfamily. Methionine importer (TC 3.A.1.24) family. The complex is composed of two ATP-binding proteins (MetN), two transmembrane proteins (MetI) and a solute-binding protein (MetQ).

The protein resides in the cell inner membrane. The enzyme catalyses L-methionine(out) + ATP + H2O = L-methionine(in) + ADP + phosphate + H(+). The catalysed reaction is D-methionine(out) + ATP + H2O = D-methionine(in) + ADP + phosphate + H(+). Functionally, part of the ABC transporter complex MetNIQ involved in methionine import. Responsible for energy coupling to the transport system. The sequence is that of Methionine import ATP-binding protein MetN from Helicobacter acinonychis (strain Sheeba).